Consider the following 204-residue polypeptide: Signal peptidase I (204 aa).

Residues 1–10 lie on the Cytoplasmic side of the membrane; it reads MNLFKNFLKE. The helical transmembrane segment at 11-30 threads the bilayer; that stretch reads WGLFLLILSLLALSRIFFWS. At 31-204 the chain is on the extracellular side; sequence NVRVEGHSMD…FWPITRIGTF (174 aa). Active-site residues include serine 38 and lysine 76.

It belongs to the peptidase S26 family.

Its subcellular location is the cell membrane. It carries out the reaction Cleavage of hydrophobic, N-terminal signal or leader sequences from secreted and periplasmic proteins.. This Streptococcus pneumoniae (strain ATCC BAA-255 / R6) protein is Signal peptidase I (lepB).